We begin with the raw amino-acid sequence, 911 residues long: Nitrate reductase [NADH], clone PBNBR1412 (911 aa).

A disordered region spans residues 53 to 72 (NDAVDDSYDSSDDEDESHNR). The segment covering 56–68 (VDDSYDSSDDEDE) has biased composition (acidic residues). Cys191 provides a ligand contact to Mo-molybdopterin. The Cytochrome b5 heme-binding domain maps to 539–614 (AKMYSMSEVR…LEDYRIGELI (76 aa)). Heme-binding residues include His574 and His597. The 113-residue stretch at 654 to 766 (REKVPVTLIE…KGPLGHIEYL (113 aa)) folds into the FAD-binding FR-type domain. FAD is bound by residues 706 to 709 (RAYT), 723 to 727 (VVKVY), Phe728, Phe735, 740 to 742 (LMS), and Thr793.

The protein belongs to the nitrate reductase family. Homodimer. FAD is required as a cofactor. The cofactor is heme. Mo-molybdopterin serves as cofactor.

The enzyme catalyses nitrite + NAD(+) + H2O = nitrate + NADH + H(+). Its function is as follows. Nitrate reductase is a key enzyme involved in the first step of nitrate assimilation in plants, fungi and bacteria. In Brassica napus (Rape), this protein is Nitrate reductase [NADH], clone PBNBR1412 (NIA2).